The sequence spans 235 residues: Histidine/lysine/arginine/ornithine transport system permease protein HisM (235 aa).

Topologically, residues 1–26 (MIEIIQEYWKSLLWTDGYRFTGVAIT) are periplasmic. The 199-residue stretch at 23–221 (VAITLWLLIS…LISYVLISLF (199 aa)) folds into the ABC transmembrane type-1 domain. Residues 27–47 (LWLLISSVVMGGLLAVILAVG) form a helical membrane-spanning segment. Residues 48–58 (RVSSNKFIRFP) lie on the Cytoplasmic side of the membrane. The helical transmembrane segment at 59–79 (IWLFTYIFRGTPLYVQLLVFY) threads the bilayer. The Periplasmic portion of the chain corresponds to 80-104 (SGMYTLEIVKGTDLLNAFFRSGLNC). Residues 105–125 (TVLALTLNTCAYTTEIFAGAI) traverse the membrane as a helical segment. Residues 126–157 (RSVPHGEIEAARAYGFSSFKMYRCIILPSALR) are Cytoplasmic-facing. A helical transmembrane segment spans residues 158–178 (IALPAYSNEVILMLHSTALAF). Residues 179 to 199 (TATVPDLLKIARDINSATYQP) are Periplasmic-facing. The helical transmembrane segment at 200-220 (FTAFGIAAVLYLLISYVLISL) threads the bilayer. Residues 221 to 235 (FRRAERRWLQHVSSK) are Cytoplasmic-facing.

Belongs to the binding-protein-dependent transport system permease family. HisMQ subfamily. In terms of assembly, the HisPMQJ complex is composed of two ATP-binding proteins (HisP), two transmembrane proteins (HisM and HisQ) and a solute-binding protein (HisJ). The HisPMQ-ArgT complex is composed of two ATP-binding proteins (HisP), two transmembrane proteins (HisM and HisQ) and a solute-binding protein (ArgT).

Its subcellular location is the cell inner membrane. Functionally, part of the ABC transporter complex HisPMQJ involved in histidine transport. Is also part of the ABC transporter complex HisPMQ-ArgT involved in lysine/arginine/ornithine transport. Probably responsible for the translocation of the substrate across the membrane. The protein is Histidine/lysine/arginine/ornithine transport system permease protein HisM (hisM) of Salmonella typhi.